Here is a 603-residue protein sequence, read N- to C-terminus: Elongation factor 4 (603 aa).

Residues 7–189 enclose the tr-type G domain; the sequence is SRLRNFCIIA…AVVDRIPSPK (183 aa). GTP-binding positions include 19–24 and 136–139; these read DHGKST and NKVD.

Belongs to the TRAFAC class translation factor GTPase superfamily. Classic translation factor GTPase family. LepA subfamily.

The protein localises to the cell inner membrane. It catalyses the reaction GTP + H2O = GDP + phosphate + H(+). Its function is as follows. Required for accurate and efficient protein synthesis under certain stress conditions. May act as a fidelity factor of the translation reaction, by catalyzing a one-codon backward translocation of tRNAs on improperly translocated ribosomes. Back-translocation proceeds from a post-translocation (POST) complex to a pre-translocation (PRE) complex, thus giving elongation factor G a second chance to translocate the tRNAs correctly. Binds to ribosomes in a GTP-dependent manner. This is Elongation factor 4 from Prochlorococcus marinus (strain NATL2A).